The chain runs to 301 residues: NADH-cytochrome b5 reductase 3 (301 aa).

Gly-2 is lipidated: N-myristoyl glycine. The FAD-binding FR-type domain occupies 40–152; the sequence is DIKYPLRLID…RGPNGLLVYQ (113 aa). N6-acetyllysine is present on Lys-42. Residue Tyr-43 is modified to Phosphotyrosine. Position 50 is an N6-acetyllysine (Lys-50). FAD-binding residues include Arg-92, Pro-93, Tyr-94, Val-109, Lys-111, and Phe-114. N6-acetyllysine is present on Lys-120. 4 residues coordinate FAD: Lys-126, Met-127, Ser-128, and Thr-185.

Belongs to the flavoprotein pyridine nucleotide cytochrome reductase family. In terms of assembly, component of a complex composed of cytochrome b5, NADH-cytochrome b5 reductase (CYB5R3) and MTARC2. Interacts with MTLN; the interaction is required to maintain cellular lipid composition and leads to stimulation of mitochondrial respiratory complex I activity. It depends on FAD as a cofactor.

Its subcellular location is the endoplasmic reticulum membrane. The protein localises to the mitochondrion outer membrane. The catalysed reaction is 2 Fe(III)-[cytochrome b5] + NADH = 2 Fe(II)-[cytochrome b5] + NAD(+) + H(+). Functionally, catalyzes the reduction of two molecules of cytochrome b5 using NADH as the electron donor. The chain is NADH-cytochrome b5 reductase 3 from Mus musculus (Mouse).